The chain runs to 601 residues: Glutathione-regulated potassium-efflux system protein KefB (601 aa).

Transmembrane regions (helical) follow at residues 4-24 (SDFL…VPLA), 29-49 (IGAV…GLGF), 55-75 (EILH…GLEL), 87-107 (IFGV…GLLM), 115-135 (AAVV…LQLM), 152-172 (VLLF…LLAG), 177-197 (HFDW…LIGG), 207-227 (FIAA…LVLG), 230-250 (LFMD…GVLL), 268-288 (GLLL…GVLY), 291-311 (LLWV…VLYL), 324-344 (MQFA…FSTA), and 356-376 (ALLL…MKLV). The RCK N-terminal domain occupies 400 to 519 (KPQVIVVGFG…AGVTQFSRET (120 aa)).

It belongs to the monovalent cation:proton antiporter 2 (CPA2) transporter (TC 2.A.37) family. KefB subfamily. Interacts with the regulatory subunit KefG.

The protein resides in the cell inner membrane. In terms of biological role, pore-forming subunit of a potassium efflux system that confers protection against electrophiles. Catalyzes K(+)/H(+) antiport. The polypeptide is Glutathione-regulated potassium-efflux system protein KefB (Escherichia coli O1:K1 / APEC).